We begin with the raw amino-acid sequence, 772 residues long: RNA exonuclease 5 (772 aa).

The span at 1-10 (MEPEREGTER) shows a compositional bias: basic and acidic residues. Residues 1–26 (MEPEREGTERHPRKVRKRRQAPNKLV) form a disordered region. Basic residues predominate over residues 11–21 (HPRKVRKRRQA). The Exonuclease domain maps to 228–376 (LFGLDCEMCL…EDARIILELA (149 aa)). RRM domains lie at 505 to 579 (STVY…RPVT) and 600 to 679 (GSIY…RHLH).

This is RNA exonuclease 5 (REXO5) from Macaca fascicularis (Crab-eating macaque).